Here is a 137-residue protein sequence, read N- to C-terminus: SPbeta prophage-derived uncharacterized protein YoqU (137 aa).

The polypeptide is SPbeta prophage-derived uncharacterized protein YoqU (yoqU) (Bacillus subtilis (strain 168)).